We begin with the raw amino-acid sequence, 625 residues long: Chaperone protein HtpG (625 aa).

The segment at 1–332 (MSKKTNAPVQ…TEDLSLNVSR (332 aa)) is a; substrate-binding. The interval 333-545 (EVVQSSPVMA…KDAMDSQMER (213 aa)) is b. Residues 546–625 (MMKMMQQEMP…ELIEAATLSR (80 aa)) are c.

This sequence belongs to the heat shock protein 90 family. In terms of assembly, homodimer.

It is found in the cytoplasm. Its function is as follows. Molecular chaperone. Has ATPase activity. The sequence is that of Chaperone protein HtpG from Chlorobium phaeovibrioides (strain DSM 265 / 1930) (Prosthecochloris vibrioformis (strain DSM 265)).